Reading from the N-terminus, the 145-residue chain is Large ribosomal subunit protein uL14m (145 aa).

The N-terminal 30 residues, 1–30, are a transit peptide targeting the mitochondrion; sequence MAFSSGLWGPCVHMSRAFSQRCFSTTGSLG.

It belongs to the universal ribosomal protein uL14 family. Component of the mitochondrial ribosome large subunit (39S) which comprises a 16S rRNA and about 50 distinct proteins. Interacts with MALSU1.

Its subcellular location is the mitochondrion. In terms of biological role, may form part of 2 intersubunit bridges in the assembled ribosome. Upon binding to MALSU1, intersubunit bridge formation is blocked, preventing ribosome formation and repressing translation. In Bos taurus (Bovine), this protein is Large ribosomal subunit protein uL14m (MRPL14).